A 415-amino-acid polypeptide reads, in one-letter code: Histidine--tRNA ligase (415 aa).

The protein belongs to the class-II aminoacyl-tRNA synthetase family. Homodimer.

The protein localises to the cytoplasm. The enzyme catalyses tRNA(His) + L-histidine + ATP = L-histidyl-tRNA(His) + AMP + diphosphate + H(+). The polypeptide is Histidine--tRNA ligase (Clostridium botulinum (strain Loch Maree / Type A3)).